Consider the following 162-residue polypeptide: Large ribosomal subunit protein uL10 (162 aa).

This sequence belongs to the universal ribosomal protein uL10 family. Part of the ribosomal stalk of the 50S ribosomal subunit. The N-terminus interacts with L11 and the large rRNA to form the base of the stalk. The C-terminus forms an elongated spine to which L12 dimers bind in a sequential fashion forming a multimeric L10(L12)X complex.

Forms part of the ribosomal stalk, playing a central role in the interaction of the ribosome with GTP-bound translation factors. The chain is Large ribosomal subunit protein uL10 from Acholeplasma laidlawii (strain PG-8A).